The sequence spans 481 residues: ATP synthase subunit beta, chloroplastic (481 aa).

161-168 (GGAGVGKT) is an ATP binding site.

It belongs to the ATPase alpha/beta chains family. In terms of assembly, F-type ATPases have 2 components, CF(1) - the catalytic core - and CF(0) - the membrane proton channel. CF(1) has five subunits: alpha(3), beta(3), gamma(1), delta(1), epsilon(1). CF(0) has four main subunits: a(1), b(1), b'(1) and c(9-12).

The protein resides in the plastid. The protein localises to the chloroplast thylakoid membrane. It catalyses the reaction ATP + H2O + 4 H(+)(in) = ADP + phosphate + 5 H(+)(out). Functionally, produces ATP from ADP in the presence of a proton gradient across the membrane. The catalytic sites are hosted primarily by the beta subunits. This Mesostigma viride (Green alga) protein is ATP synthase subunit beta, chloroplastic.